The following is a 301-amino-acid chain: D-alanine--D-alanine ligase (301 aa).

One can recognise an ATP-grasp domain in the interval Lys102–Glu295. Pro128 to Thr181 provides a ligand contact to ATP. Residues Asp248, Glu262, and Asn264 each contribute to the Mg(2+) site.

This sequence belongs to the D-alanine--D-alanine ligase family. Requires Mg(2+) as cofactor. It depends on Mn(2+) as a cofactor.

Its subcellular location is the cytoplasm. The catalysed reaction is 2 D-alanine + ATP = D-alanyl-D-alanine + ADP + phosphate + H(+). It functions in the pathway cell wall biogenesis; peptidoglycan biosynthesis. Its function is as follows. Cell wall formation. This Acidiphilium cryptum (strain JF-5) protein is D-alanine--D-alanine ligase.